The chain runs to 416 residues: Probable carboxypeptidase An18g06210 (416 aa).

A signal peptide spans 1-16; it reads MKSPISLLAAVGVASA. N-linked (GlcNAc...) asparagine glycans are attached at residues Asn54, Asn70, and Asn129. Zn(2+) is bound at residue Asp142. Glu174 (proton acceptor) is an active-site residue. Glu175 contacts Zn(2+). N-linked (GlcNAc...) asparagine glycosylation is found at Asn187 and Asn319.

This sequence belongs to the peptidase M20A family. The cofactor is Zn(2+).

It is found in the secreted. The polypeptide is Probable carboxypeptidase An18g06210 (Aspergillus niger (strain ATCC MYA-4892 / CBS 513.88 / FGSC A1513)).